The primary structure comprises 341 residues: Homeobox protein knotted-1-like 8 (341 aa).

The segment covering 1–17 (MESFASLAGGGSSSTTA) has biased composition (low complexity). 3 disordered regions span residues 1–72 (MESF…AVQG), 121–148 (AAQQLDEADGHPRRRHEPQRDDDPDQLD), and 187–207 (AESNCEGTGSSEEEQDPSDKQ). Over residues 187-196 (AESNCEGTGS) the composition is skewed to polar residues. The 21-residue stretch at 207–227 (QLKHQLLRKYGGSLGDLRQVF) folds into the ELK domain. Residues 228 to 291 (SKRTKKGKLP…NQRKRHWKPT (64 aa)) constitute a DNA-binding region (homeobox; TALE-type).

The protein belongs to the TALE/KNOX homeobox family.

The protein localises to the nucleus. In terms of biological role, probable transcription factor that may be involved in shoot formation during embryogenesis. In Oryza sativa subsp. japonica (Rice), this protein is Homeobox protein knotted-1-like 8 (OSH43).